Here is a 500-residue protein sequence, read N- to C-terminus: 4-aminobutyrate aminotransferase, mitochondrial (500 aa).

Residues 1 to 28 (MAFLLITRRLACSSQKNLHLFIPGSRYI) constitute a mitochondrion transit peptide. Cys163 serves as a coordination point for [2Fe-2S] cluster. Residue 164-165 (GS) participates in pyridoxal 5'-phosphate binding. Residue Cys166 participates in [2Fe-2S] cluster binding. Residue Arg220 coordinates substrate. N6-succinyllysine is present on Lys231. N6-acetyllysine; alternate is present on Lys252. Lys252 bears the N6-succinyllysine; alternate mark. N6-acetyllysine occurs at positions 279 and 318. Lys357 carries the post-translational modification N6-(pyridoxal phosphate)lysine. Residue Thr381 participates in pyridoxal 5'-phosphate binding. Position 413 is an N6-acetyllysine; alternate (Lys413). At Lys413 the chain carries N6-succinyllysine; alternate. 2 positions are modified to N6-acetyllysine: Lys452 and Lys470.

The protein belongs to the class-III pyridoxal-phosphate-dependent aminotransferase family. As to quaternary structure, homodimer; disulfide-linked. It depends on pyridoxal 5'-phosphate as a cofactor. [2Fe-2S] cluster serves as cofactor.

It is found in the mitochondrion matrix. It catalyses the reaction 4-aminobutanoate + 2-oxoglutarate = succinate semialdehyde + L-glutamate. The catalysed reaction is (S)-3-amino-2-methylpropanoate + 2-oxoglutarate = 2-methyl-3-oxopropanoate + L-glutamate. Its function is as follows. Catalyzes the conversion of gamma-aminobutyrate and L-beta-aminoisobutyrate to succinate semialdehyde and methylmalonate semialdehyde, respectively. Can also convert delta-aminovalerate and beta-alanine. The polypeptide is 4-aminobutyrate aminotransferase, mitochondrial (Mus musculus (Mouse)).